We begin with the raw amino-acid sequence, 101 residues long: Small ribosomal subunit protein uS14 (101 aa).

It belongs to the universal ribosomal protein uS14 family. Part of the 30S ribosomal subunit. Contacts proteins S3 and S10.

Its function is as follows. Binds 16S rRNA, required for the assembly of 30S particles and may also be responsible for determining the conformation of the 16S rRNA at the A site. The protein is Small ribosomal subunit protein uS14 of Phenylobacterium zucineum (strain HLK1).